Consider the following 533-residue polypeptide: Invertase (533 aa).

The signal sequence occupies residues 1–22 (MVQVLSVLVIPLLTLFFGYVAS). Residues 47-50 (WMND) and Gln68 each bind substrate. Residue Asp50 is part of the active site. N-linked (GlcNAc...) asparagine glycosylation is present at Asn72. 110 to 111 (FS) provides a ligand contact to substrate. 3 N-linked (GlcNAc...) asparagine glycosylation sites follow: Asn119, Asn120, and Asn126. 178 to 179 (RD) serves as a coordination point for substrate. Asn219 carries N-linked (GlcNAc...) asparagine glycosylation. Trp314 is a substrate binding site. Asn334, Asn392, and Asn419 each carry an N-linked (GlcNAc...) asparagine glycan.

The protein belongs to the glycosyl hydrolase 32 family.

The catalysed reaction is Hydrolysis of terminal non-reducing beta-D-fructofuranoside residues in beta-D-fructofuranosides.. The polypeptide is Invertase (INV) (Schwanniomyces occidentalis (Yeast)).